Reading from the N-terminus, the 95-residue chain is Large ribosomal subunit protein uL23 (95 aa).

This sequence belongs to the universal ribosomal protein uL23 family. As to quaternary structure, part of the 50S ribosomal subunit. Contacts protein L29, and trigger factor when it is bound to the ribosome.

One of the early assembly proteins it binds 23S rRNA. One of the proteins that surrounds the polypeptide exit tunnel on the outside of the ribosome. Forms the main docking site for trigger factor binding to the ribosome. The polypeptide is Large ribosomal subunit protein uL23 (Bacillus pumilus (strain SAFR-032)).